Consider the following 80-residue polypeptide: CDC42 small effector protein 1 (80 aa).

2 S-palmitoyl cysteine lipidation sites follow: C10 and C11. The region spanning 30 to 43 is the CRIB domain; sequence IGEPMNFVHLTHIG. The tract at residues 48–80 is disordered; that stretch reads GAGDGLAMTGAVQEQMRSKGNHRDRPWSNSRAL.

It belongs to the CDC42SE/SPEC family. In terms of assembly, interacts with CDC42 (in GTP-bound form). Interacts weakly with RAC1 and not at all with RHOA.

It localises to the cytoplasm. Its subcellular location is the cytoskeleton. The protein localises to the cell membrane. Its function is as follows. Probably involved in the organization of the actin cytoskeleton by acting downstream of CDC42, inducing actin filament assembly. Alters CDC42-induced cell shape changes. In activated T-cells, may play a role in CDC42-mediated F-actin accumulation at the immunological synapse. May play a role in early contractile events in phagocytosis in macrophages. The protein is CDC42 small effector protein 1 (Cdc42se1) of Mus musculus (Mouse).